A 490-amino-acid chain; its full sequence is Glycogen synthase kinase-3 alpha (490 aa).

Positions Met1–Gly15 are enriched in gly residues. Positions Met1–Ser97 are disordered. Ser2 bears the N-acetylserine mark. Position 2 is a phosphoserine (Ser2). Position 21 is a phosphoserine; by PKB/AKT1 (Ser21). Gly residues predominate over residues Pro25 to Ala82. Residues Ser72, Ser77, and Ser97 each carry the phosphoserine modification. In terms of domain architecture, Protein kinase spans Tyr119–Phe404. ATP contacts are provided by residues Ile125–Val133 and Lys148. Asp244 serves as the catalytic Proton acceptor. Phosphotyrosine is present on Tyr279. The interval Gly451–Ser490 is disordered. The span at Pro455 to Asp480 shows a compositional bias: polar residues. Over residues Ala481 to Ser490 the composition is skewed to low complexity.

Belongs to the protein kinase superfamily. CMGC Ser/Thr protein kinase family. GSK-3 subfamily. As to quaternary structure, monomer. Interacts with AXIN1 and CTNNB1/beta-catenin. Interacts with ARRB2. Interacts with CTNND2. Interacts with LMBR1L. Interacts with DDX3X. Interacts with TNFRSF10B. Post-translationally, phosphorylated by AKT1 at Ser-21: upon insulin-mediated signaling, the activated PKB/AKT1 protein kinase phosphorylates and deactivates GSK3A, resulting in the dephosphorylation and activation of GYS1. Activated by phosphorylation at Tyr-279.

The enzyme catalyses L-seryl-[tau protein] + ATP = O-phospho-L-seryl-[tau protein] + ADP + H(+). The catalysed reaction is L-threonyl-[tau protein] + ATP = O-phospho-L-threonyl-[tau protein] + ADP + H(+). It catalyses the reaction L-seryl-[protein] + ATP = O-phospho-L-seryl-[protein] + ADP + H(+). It carries out the reaction L-threonyl-[protein] + ATP = O-phospho-L-threonyl-[protein] + ADP + H(+). With respect to regulation, activated by phosphorylation at Tyr-279. In response to insulin, inhibited by phosphorylation at Ser-21 by PKB/AKT1; phosphorylation at this site causes a conformational change, preventing access of substrates to the active site. Inhibited by lithium. Its function is as follows. Constitutively active protein kinase that acts as a negative regulator in the hormonal control of glucose homeostasis, Wnt signaling and regulation of transcription factors and microtubules, by phosphorylating and inactivating glycogen synthase (GYS1 or GYS2), CTNNB1/beta-catenin, APC and AXIN1. Requires primed phosphorylation of the majority of its substrates. Contributes to insulin regulation of glycogen synthesis by phosphorylating and inhibiting GYS1 activity and hence glycogen synthesis. Regulates glycogen metabolism in liver, but not in muscle. May also mediate the development of insulin resistance by regulating activation of transcription factors. In Wnt signaling, regulates the level and transcriptional activity of nuclear CTNNB1/beta-catenin. Facilitates amyloid precursor protein (APP) processing and the generation of APP-derived amyloid plaques found in Alzheimer disease. May be involved in the regulation of replication in pancreatic beta-cells. Is necessary for the establishment of neuronal polarity and axon outgrowth. Through phosphorylation of the anti-apoptotic protein MCL1, may control cell apoptosis in response to growth factors deprivation. Acts as a regulator of autophagy by mediating phosphorylation of KAT5/TIP60 under starvation conditions, activating KAT5/TIP60 acetyltransferase activity and promoting acetylation of key autophagy regulators, such as ULK1 and RUBCNL/Pacer. Negatively regulates extrinsic apoptotic signaling pathway via death domain receptors. Promotes the formation of an anti-apoptotic complex, made of DDX3X, BRIC2 and GSK3B, at death receptors, including TNFRSF10B. The anti-apoptotic function is most effective with weak apoptotic signals and can be overcome by stronger stimulation. This is Glycogen synthase kinase-3 alpha (Gsk3a) from Mus musculus (Mouse).